The following is a 511-amino-acid chain: Vicilin-like seed storage protein At2g28490 (511 aa).

The signal sequence occupies residues 1 to 27 (MEKNKRAIGFLLLVVLINGVMMTRSNG). The segment at 54-81 (GGGGGGAWGGEGEGGGEWGGGGEGGGGG) is disordered. Cupin type-1 domains lie at 86–238 (FMMR…PELQ) and 329–480 (YNIY…ETMR). Residues Asn231, Asn369, Asn403, and Asn464 are each glycosylated (N-linked (GlcNAc...) asparagine).

This sequence belongs to the 7S seed storage protein family.

Functionally, seed storage protein. The polypeptide is Vicilin-like seed storage protein At2g28490 (Arabidopsis thaliana (Mouse-ear cress)).